The following is a 247-amino-acid chain: Phosphoribosylaminoimidazole-succinocarboxamide synthase (247 aa).

This sequence belongs to the SAICAR synthetase family.

It carries out the reaction 5-amino-1-(5-phospho-D-ribosyl)imidazole-4-carboxylate + L-aspartate + ATP = (2S)-2-[5-amino-1-(5-phospho-beta-D-ribosyl)imidazole-4-carboxamido]succinate + ADP + phosphate + 2 H(+). It functions in the pathway purine metabolism; IMP biosynthesis via de novo pathway; 5-amino-1-(5-phospho-D-ribosyl)imidazole-4-carboxamide from 5-amino-1-(5-phospho-D-ribosyl)imidazole-4-carboxylate: step 1/2. This Gloeobacter violaceus (strain ATCC 29082 / PCC 7421) protein is Phosphoribosylaminoimidazole-succinocarboxamide synthase.